Consider the following 253-residue polypeptide: Large ribosomal subunit protein mL57 (253 aa).

A mitochondrion-targeting transit peptide spans 1–28 (MENSMMFISRSLRRPVTALNCNLQSVRT).

This sequence belongs to the ribonuclease III family. Mitochondrion-specific ribosomal protein mL57 subfamily. As to quaternary structure, component of the mitochondrial large ribosomal subunit (mt-LSU). Mature yeast 74S mitochondrial ribosomes consist of a small (37S) and a large (54S) subunit. The 37S small subunit contains a 15S ribosomal RNA (15S mt-rRNA) and 34 different proteins. The 54S large subunit contains a 21S rRNA (21S mt-rRNA) and 46 different proteins. mL57 forms a heterodimer with mL44 and stabilizes rRNA expansion segments 1/2 at a membrane-facing protuberance close to the point of attachment of the ribosome to the translocon in the membrane.

Its subcellular location is the mitochondrion. Functionally, component of the mitochondrial ribosome (mitoribosome), a dedicated translation machinery responsible for the synthesis of mitochondrial genome-encoded proteins, including at least some of the essential transmembrane subunits of the mitochondrial respiratory chain. The mitoribosomes are attached to the mitochondrial inner membrane and translation products are cotranslationally integrated into the membrane. The protein is Large ribosomal subunit protein mL57 (MRPL15) of Saccharomyces cerevisiae (strain ATCC 204508 / S288c) (Baker's yeast).